Here is a 284-residue protein sequence, read N- to C-terminus: MVNINELPENILLELFTHVPAPQLLRNCRLVCSLWRDLIDVMTLWKRKSLREGFVTKDRDEPVDDWKIFYILCSLQRNLLRNPCAEENLRSWRIDSNGGDEWKVESLPGDHGTSFPDTKVKKYFVTSYGMCLKSQMVDLKAEGYSEKLLDTVRPDIVVKDWFAPRADCGCTYHLRVQLASADYIVLASFEPPPVTIEQWNDASWQEISHTFSNYPPGVRHILFQHGGKDTQFWKGWYGPRVTNSSIIVSHRTAKNPAPARTLPEEDTSNRRKILSFGSWEDLSP.

In terms of domain architecture, F-box spans 1–48 (MVNINELPENILLELFTHVPAPQLLRNCRLVCSLWRDLIDVMTLWKRK). An FBA domain is found at 69-250 (FYILCSLQRN…VTNSSIIVSH (182 aa)). Serine 249, serine 268, serine 275, serine 278, and serine 283 each carry phosphoserine.

Part of a SCF (SKP1-cullin-F-box) protein ligase complex. Interacts with VCP, CHEK1 and CUL1.

It is found in the cytoplasm. It functions in the pathway protein modification; protein ubiquitination. Functionally, substrate-recognition component of some SCF (SKP1-CUL1-F-box protein)-type E3 ubiquitin ligase complexes. Involved in endoplasmic reticulum-associated degradation pathway (ERAD) for misfolded lumenal proteins by recognizing and binding sugar chains on unfolded glycoproteins that are retrotranslocated into the cytosol and promoting their ubiquitination and subsequent degradation. Able to recognize and bind denatured glycoproteins, which are modified with not only high-mannose but also complex-type oligosaccharides. Also recognizes sulfated glycans. Also involved in DNA damage response by specifically recognizing activated CHEK1 (phosphorylated on 'Ser-345'), promoting its ubiquitination and degradation. Ubiquitination of CHEK1 is required to ensure that activated CHEK1 does not accumulate as cells progress through S phase, or when replication forks encounter transient impediments during normal DNA replication. The polypeptide is F-box only protein 6 (Fbxo6) (Rattus norvegicus (Rat)).